A 500-amino-acid polypeptide reads, in one-letter code: Probable cytosol aminopeptidase (500 aa).

The Mn(2+) site is built by lysine 264 and aspartate 269. The active site involves lysine 276. Residues aspartate 287, aspartate 346, and glutamate 348 each coordinate Mn(2+). Residue arginine 350 is part of the active site.

Belongs to the peptidase M17 family. Mn(2+) is required as a cofactor.

The protein resides in the cytoplasm. The catalysed reaction is Release of an N-terminal amino acid, Xaa-|-Yaa-, in which Xaa is preferably Leu, but may be other amino acids including Pro although not Arg or Lys, and Yaa may be Pro. Amino acid amides and methyl esters are also readily hydrolyzed, but rates on arylamides are exceedingly low.. The enzyme catalyses Release of an N-terminal amino acid, preferentially leucine, but not glutamic or aspartic acids.. Its function is as follows. Presumably involved in the processing and regular turnover of intracellular proteins. Catalyzes the removal of unsubstituted N-terminal amino acids from various peptides. The polypeptide is Probable cytosol aminopeptidase (Rhodopseudomonas palustris (strain BisB5)).